A 179-amino-acid chain; its full sequence is Large ribosomal subunit protein uL6 (179 aa).

It belongs to the universal ribosomal protein uL6 family. In terms of assembly, part of the 50S ribosomal subunit.

Its function is as follows. This protein binds to the 23S rRNA, and is important in its secondary structure. It is located near the subunit interface in the base of the L7/L12 stalk, and near the tRNA binding site of the peptidyltransferase center. The polypeptide is Large ribosomal subunit protein uL6 (Chlorobium phaeobacteroides (strain DSM 266 / SMG 266 / 2430)).